A 315-amino-acid polypeptide reads, in one-letter code: MDNLDVICIGAAIVDIPLQPVSKNIFDVDSYPLERIAMTTGGDAINEATIISRLGHRTALMSRIGKDAAGQFILDHCRKENIDIQSLKQDVSIDTSINVGLVTEDGERTFVTNRNGSLWKLNIDDVDFARFSQAKLLSLASIFNSPLLDGKALTEIFTQAKARQMIICADMIKPRLNETLDDICEALSYVDYLFPNFAEAKLLTGKETLDEIADCFLACGVKTVVIKTGKDGCFIKRGDMTMKVPAVAGITAIDTIGAGDNFASGFIAALLEGKNLRECARFANATAAISVLSVGATTGVKNRKLVEQLLEEYEG.

It belongs to the carbohydrate kinase PfkB family.

This is an uncharacterized protein from Escherichia coli (strain K12).